A 207-amino-acid polypeptide reads, in one-letter code: Casparian strip membrane protein 3 (207 aa).

The Cytoplasmic segment spans residues 1–45; the sequence is MDSTKSTEETAINIPRESSSTKHKIAVAAVKAVATPHKRGGMKRG. The chain crosses the membrane as a helical span at residues 46–66; it reads VAIFDFILRICALAAALAATA. Over 67–95 the chain is Extracellular; sequence TMGTTDQTLPFFTQFFQFQASYDDLPTFT. A helical membrane pass occupies residues 96 to 116; sequence FFVIANAIASGYLVLSLPFSI. The Cytoplasmic portion of the chain corresponds to 117–128; it reads VAIVRPHVTGVK. The helical transmembrane segment at 129–149 threads the bilayer; sequence LLLLILDTVLVAFTTAAAASA. Residues 150 to 181 lie on the Extracellular side of the membrane; sequence AAIVYLAHNGNSNTNWFAICQQFNDFCQRTSG. Residues 182-202 form a helical membrane-spanning segment; it reads AVVASFIAAAIFIFLVVLSAV. Topologically, residues 203–207 are cytoplasmic; the sequence is ALRRH.

The protein belongs to the Casparian strip membrane proteins (CASP) family. As to quaternary structure, homodimer and heterodimers.

It is found in the cell membrane. Functionally, regulates membrane-cell wall junctions and localized cell wall deposition. Required for establishment of the Casparian strip membrane domain (CSD) and the subsequent formation of Casparian strips, a cell wall modification of the root endodermis that determines an apoplastic barrier between the intraorganismal apoplasm and the extraorganismal apoplasm and prevents lateral diffusion. This Erythranthe guttata (Yellow monkey flower) protein is Casparian strip membrane protein 3.